Here is a 202-residue protein sequence, read N- to C-terminus: Small ribosomal subunit protein uS4 (202 aa).

Residues 1–13 (MSRYRGPRLRVTR) show a composition bias toward basic residues. A disordered region spans residues 1-42 (MSRYRGPRLRVTRRLGELPGLTRKASKKSNPPGQHGQARRKR). One can recognise an S4 RNA-binding domain in the interval 90-152 (NRLDNVCFRL…KASKKLVEGN (63 aa)).

It belongs to the universal ribosomal protein uS4 family. As to quaternary structure, part of the 30S ribosomal subunit. Contacts protein S5. The interaction surface between S4 and S5 is involved in control of translational fidelity.

Functionally, one of the primary rRNA binding proteins, it binds directly to 16S rRNA where it nucleates assembly of the body of the 30S subunit. Its function is as follows. With S5 and S12 plays an important role in translational accuracy. This is Small ribosomal subunit protein uS4 from Prochlorococcus marinus (strain MIT 9515).